Reading from the N-terminus, the 885-residue chain is Sensor histidine kinase KdpD (885 aa).

A run of 4 helical transmembrane segments spans residues 384-404 (AIDM…GLWI), 415-435 (IILM…RSFI), 436-456 (IGFL…TEPR), and 464-484 (FDYP…SALL). A Histidine kinase domain is found at 660-880 (SISHDIRTPL…IFYFNIYTDF (221 aa)). His-663 bears the Phosphohistidine; by autocatalysis mark.

The protein resides in the membrane. The catalysed reaction is ATP + protein L-histidine = ADP + protein N-phospho-L-histidine.. Its activity is regulated as follows. Cyclic di-AMP is a negative regulator of the Kdp system. In terms of biological role, member of the two-component regulatory system KdpD/KdpE that regulates the transcription of a series of virulence factors through sensing external K(+) concentrations. Also regulates capsular polysaccharide production. May function as a membrane-associated protein kinase that phosphorylates KdpE in response to environmental signals. In turn, KpdE functions as a transcriptional regulator by direct binding to promoter regions of target genes including spa, hla, aur and geh. This Staphylococcus aureus (strain NCTC 8325 / PS 47) protein is Sensor histidine kinase KdpD.